The sequence spans 342 residues: Epoxide hydrolase srdG (342 aa).

Residues 44 to 332 enclose the AB hydrolase-1 domain; the sequence is ATVLLLHGWP…LIHTPEEVNK (289 aa). Catalysis depends on Asp-122, which acts as the Nucleophile. His-320 serves as the catalytic Proton acceptor.

Belongs to the AB hydrolase superfamily. Epoxide hydrolase family.

Its function is as follows. Highly reducing polyketide synthase; part of the gene cluster that mediates the biosynthesis of sordarial, a salicylic aldehyde structurally related to the phytotoxin pyriculol. The most interesting aspect of this pathway is formation of an aromatic product from the highly reducing polyketide synthase srdA. SrdA synthesizes a reduced polyketide chain from one molecule of acetyl-CoA and five molecules of malonyl-CoA. The polyketide chain is then reductively released as an aldehyde. The oxidoreductases srdC, srdD and srdE then oxidize one of the hydroxy groups to facilitate the intramolecular aldol condensation, followed by dehydration to yield a salicylic aldehyde. This aldehyde can undergo facile reduction by endogenous reductases to yield the alcohol 1-hydroxy-2-hydroxymethyl-3-pent-1,3-dienylbenzene. The flavin-dependent srdI counteract against the propensity of the aldehydes to be reduced under physiological conditions and is responsible for reoxidizing 1-hydroxy-2-hydroxymethyl-3-pent-1,3-dienylbenzene back to the salicylic aldehyde. This salicylic aldehyde is then selectively epoxidized by the cupin-domain-containing oxidoreductase srdB to yield the epoxide, which can be hydrolyzed stereoselectively by the hydrolase srdG to give the final product sordarial. In Neurospora crassa (strain ATCC 24698 / 74-OR23-1A / CBS 708.71 / DSM 1257 / FGSC 987), this protein is Epoxide hydrolase srdG.